A 940-amino-acid chain; its full sequence is Glutamate receptor 2.9 (940 aa).

A signal peptide spans 1–23 (MKTNNTFLSYFVCGFLLMGVGLG). The Extracellular segment spans residues 24-566 (QNQTSEIKVG…DTWVFLEPWS (543 aa)). 6 N-linked (GlcNAc...) asparagine glycosylation sites follow: Asn-25, Asn-39, Asn-115, Asn-338, Asn-345, and Asn-528. The helical transmembrane segment at 567 to 587 (LELWVTTGCFFVFIGFVVWLF) threads the bilayer. The Cytoplasmic segment spans residues 588–596 (EHRVNTDFR). A helical membrane pass occupies residues 597-617 (GPPQYQIGTSLWFSFSTMVFA). Over 618–628 (HRENVVSNLAR) the chain is Cytoplasmic. Residues 629–649 (FVVVVWCFVVLVLTQSYTASL) form a helical membrane-spanning segment. Over 650 to 811 (TSFLTVQSLQ…NRLNLSSFLG (162 aa)) the chain is Extracellular. Residues Asn-771, Asn-776, and Asn-805 are each glycosylated (N-linked (GlcNAc...) asparagine). Residues 812–832 (LFLIAGTAISFSLLVFVALFL) form a helical membrane-spanning segment. The Cytoplasmic portion of the chain corresponds to 833–940 (YEHRHTLGDD…ESDIECRVEQ (108 aa)). Disordered stretches follow at residues 876–900 (ISSP…QSPS) and 914–940 (PSEE…RVEQ).

Belongs to the glutamate-gated ion channel (TC 1.A.10.1) family. May form heteromers. As to expression, expressed predominantly in roots.

It localises to the membrane. Functionally, glutamate-gated receptor that probably acts as a non-selective cation channel. May be involved in light-signal transduction and calcium homeostasis via the regulation of calcium influx into cells. The chain is Glutamate receptor 2.9 (GLR2.9) from Arabidopsis thaliana (Mouse-ear cress).